Reading from the N-terminus, the 142-residue chain is Ornithine decarboxylase antizyme (142 aa).

Low complexity predominate over residues 1 to 19 (MSSSIVLSNNNSNSNSMSM). The interval 1 to 34 (MSSSIVLSNNNSNSNSMSMIGQSPPCCSDVPNTP) is disordered.

The protein belongs to the ODC antizyme family. As to quaternary structure, interacts with ODC1 and thereby sterically blocks ODC homodimerization.

Functionally, ornithine decarboxylase (ODC) antizyme protein that negatively regulates ODC activity and intracellular polyamine biosynthesis and uptake in response to increased intracellular polyamine levels. Binds to ODC monomers, inhibiting the assembly of the functional ODC homodimer, and targets the monomers for ubiquitin-independent proteolytic destruction by the 26S proteasome. This Pristionchus pacificus (Parasitic nematode) protein is Ornithine decarboxylase antizyme.